A 508-amino-acid polypeptide reads, in one-letter code: UTP--glucose-1-phosphate uridylyltransferase (508 aa).

Ser-2 bears the Blocked amino end (Ser) mark. Ser-13 bears the Phosphoserine mark. Residues 113–116 (LNGG), Lys-127, Gln-190, and Gly-222 each bind UTP. 115 to 116 (GG) is a substrate binding site. Lys-127 is a Mg(2+) binding site. Residues His-223 and 251–253 (NID) contribute to the substrate site. UTP contacts are provided by Asp-253 and Lys-396. Asp-253 contacts Mg(2+). Residue Lys-396 is part of the active site. Thr-426 is subject to Phosphothreonine. Ser-434 carries the post-translational modification Phosphoserine. N6-acetyllysine is present on Lys-438. Phosphoserine occurs at positions 448 and 461. The oligomerization stretch occupies residues 457–508 (HLTVSGDVTFGKNVSLKGTVIIIANHGDRIDIPPGAVLENKIVSGNLRILDH). A critical for end-to-end subunit interaction region spans residues 502–503 (NL).

The protein belongs to the UDPGP type 1 family. In terms of assembly, homooctamer.

Its subcellular location is the cytoplasm. The catalysed reaction is alpha-D-glucose 1-phosphate + UTP + H(+) = UDP-alpha-D-glucose + diphosphate. The protein operates within glycan biosynthesis; glycogen biosynthesis. UTP--glucose-1-phosphate uridylyltransferase catalyzing the conversion of glucose-1-phosphate into UDP-glucose, a crucial precursor for the production of glycogen. The polypeptide is UTP--glucose-1-phosphate uridylyltransferase (UGP2) (Bos taurus (Bovine)).